Reading from the N-terminus, the 355-residue chain is UDP-N-acetylglucosamine--N-acetylmuramyl-(pentapeptide) pyrophosphoryl-undecaprenol N-acetylglucosamine transferase (355 aa).

UDP-N-acetyl-alpha-D-glucosamine is bound by residues 15 to 17 (TGG), N127, R163, S191, I244, 263 to 268 (ALTVSE), and Q288.

The protein belongs to the glycosyltransferase 28 family. MurG subfamily.

The protein resides in the cell inner membrane. It catalyses the reaction di-trans,octa-cis-undecaprenyl diphospho-N-acetyl-alpha-D-muramoyl-L-alanyl-D-glutamyl-meso-2,6-diaminopimeloyl-D-alanyl-D-alanine + UDP-N-acetyl-alpha-D-glucosamine = di-trans,octa-cis-undecaprenyl diphospho-[N-acetyl-alpha-D-glucosaminyl-(1-&gt;4)]-N-acetyl-alpha-D-muramoyl-L-alanyl-D-glutamyl-meso-2,6-diaminopimeloyl-D-alanyl-D-alanine + UDP + H(+). The protein operates within cell wall biogenesis; peptidoglycan biosynthesis. Cell wall formation. Catalyzes the transfer of a GlcNAc subunit on undecaprenyl-pyrophosphoryl-MurNAc-pentapeptide (lipid intermediate I) to form undecaprenyl-pyrophosphoryl-MurNAc-(pentapeptide)GlcNAc (lipid intermediate II). This is UDP-N-acetylglucosamine--N-acetylmuramyl-(pentapeptide) pyrophosphoryl-undecaprenol N-acetylglucosamine transferase from Salmonella paratyphi A (strain ATCC 9150 / SARB42).